A 31-amino-acid polypeptide reads, in one-letter code: Cycloviolacin-O19 (31 aa).

The cyclopeptide (Gly-Asp) cross-link spans 1 to 31 (GTLPCGESCVWIPCISSVVGCSCKSKVCYKD). Cystine bridges form between cysteine 5–cysteine 21, cysteine 9–cysteine 23, and cysteine 14–cysteine 28.

This is a cyclic peptide. Expressed in petioles and runners but not in leaves, petals and roots (at protein level).

Its function is as follows. Probably participates in a plant defense mechanism. The protein is Cycloviolacin-O19 of Viola odorata (Sweet violet).